Reading from the N-terminus, the 609-residue chain is Indole-3-acetic acid-amido synthetase GH3.17 (609 aa).

It belongs to the IAA-amido conjugating enzyme family.

Functionally, catalyzes the synthesis of indole-3-acetic acid (IAA)-amino acid conjugates, providing a mechanism for the plant to cope with the presence of excess auxin. Strongly reactive with Glu, Gln, Trp, Asp, Ala, Leu, Phe, Gly, Tyr, Met, Ile and Val. Appears to favor Glu over Asp while the other GH3 favor Asp over Glu. Little or no product formation with His, Ser, Thr, Arg, Lys, or Cys. Also active on pyruvic and butyric acid analogs of IAA, PAA and the synthetic auxin naphthaleneacetic acid (NAA). The two chlorinated synthetic auxin herbicides 2,4-D and 3,6-dichloro-o-anisic acid (dicamba) cannot be used as substrates. In Arabidopsis thaliana (Mouse-ear cress), this protein is Indole-3-acetic acid-amido synthetase GH3.17 (GH3.17).